The following is a 561-amino-acid chain: 3beta-hydroxysteroid-dehydrogenase/decarboxylase isoform 3 (561 aa).

Residue Lys166 participates in NAD(+) binding. The Reticulon domain occupies Val379 to Met561. Helical transmembrane passes span Phe392 to Phe412, Leu420 to Phe440, and Ser504 to Glu524.

Belongs to the 3-beta-HSD family.

The protein resides in the endoplasmic reticulum membrane. The enzyme catalyses a 3beta-hydroxysteroid-4alpha-carboxylate + NADP(+) = a 3-oxosteroid + CO2 + NADPH. The catalysed reaction is a 3beta-hydroxysteroid-4alpha-carboxylate + NAD(+) = a 3-oxosteroid + CO2 + NADH. The protein operates within steroid biosynthesis; zymosterol biosynthesis; zymosterol from lanosterol: step 4/6. The protein is 3beta-hydroxysteroid-dehydrogenase/decarboxylase isoform 3 (3BETAHSD/D3) of Arabidopsis thaliana (Mouse-ear cress).